Consider the following 530-residue polypeptide: Bifunctional purine biosynthesis protein PurH (530 aa).

Residues Thr2 to Val150 enclose the MGS-like domain.

This sequence belongs to the PurH family.

The enzyme catalyses (6R)-10-formyltetrahydrofolate + 5-amino-1-(5-phospho-beta-D-ribosyl)imidazole-4-carboxamide = 5-formamido-1-(5-phospho-D-ribosyl)imidazole-4-carboxamide + (6S)-5,6,7,8-tetrahydrofolate. The catalysed reaction is IMP + H2O = 5-formamido-1-(5-phospho-D-ribosyl)imidazole-4-carboxamide. It participates in purine metabolism; IMP biosynthesis via de novo pathway; 5-formamido-1-(5-phospho-D-ribosyl)imidazole-4-carboxamide from 5-amino-1-(5-phospho-D-ribosyl)imidazole-4-carboxamide (10-formyl THF route): step 1/1. It functions in the pathway purine metabolism; IMP biosynthesis via de novo pathway; IMP from 5-formamido-1-(5-phospho-D-ribosyl)imidazole-4-carboxamide: step 1/1. The sequence is that of Bifunctional purine biosynthesis protein PurH from Bradyrhizobium diazoefficiens (strain JCM 10833 / BCRC 13528 / IAM 13628 / NBRC 14792 / USDA 110).